A 449-amino-acid polypeptide reads, in one-letter code: Signal recognition particle protein (449 aa).

GTP is bound by residues 109-116, 191-195, and 249-252; these read GLQGSGKT, DTAGR, and SRID.

Belongs to the GTP-binding SRP family. SRP54 subfamily. Part of the signal recognition particle protein translocation system, which is composed of SRP and FtsY. SRP is a ribonucleoprotein composed of Ffh and a 4.5S RNA molecule.

It is found in the cytoplasm. It catalyses the reaction GTP + H2O = GDP + phosphate + H(+). In terms of biological role, involved in targeting and insertion of nascent membrane proteins into the cytoplasmic membrane. Binds to the hydrophobic signal sequence of the ribosome-nascent chain (RNC) as it emerges from the ribosomes. The SRP-RNC complex is then targeted to the cytoplasmic membrane where it interacts with the SRP receptor FtsY. Interaction with FtsY leads to the transfer of the RNC complex to the Sec translocase for insertion into the membrane, the hydrolysis of GTP by both Ffh and FtsY, and the dissociation of the SRP-FtsY complex into the individual components. The polypeptide is Signal recognition particle protein (Rickettsia felis (strain ATCC VR-1525 / URRWXCal2) (Rickettsia azadi)).